The primary structure comprises 904 residues: Endoplasmic reticulum metallopeptidase 1 (904 aa).

M1 bears the N-acetylmethionine mark. Residues 1–63 (MEWGSESAAV…PGGSGGASRG (63 aa)) are Cytoplasmic-facing. The segment at 1 to 65 (MEWGSESAAV…GSGGASRGAG (65 aa)) is disordered. Residues 55–65 (GGSGGASRGAG) are compositionally biased toward gly residues. The helical transmembrane segment at 64–84 (AGTGLSEVRAALGLALYLIAL) threads the bilayer. Residues 85-399 (RTLVQLSLQQ…AASKYRHGNM (315 aa)) lie on the Lumenal side of the membrane. N-linked (GlcNAc...) asparagine glycosylation is present at N182. Residues C204 and C222 are joined by a disulfide bond. H205 and D217 together coordinate Zn(2+). The active-site Proton acceptor is the E251. Residues E252, E278, and H354 each contribute to the Zn(2+) site. Residues 400–420 (VFFDVLGLFVIAYPSRIGSII) form a helical membrane-spanning segment. At 421-457 (NYMVVMGVVLYLGKKFLQPKHKTGNYKKDFLCGLGIT) the chain is on the cytoplasmic side. Residues 458–478 (LISWFTSLVTVLIIAVFISLI) traverse the membrane as a helical segment. Topologically, residues 479-489 (GQSLSWYNHFY) are lumenal. Residues 490 to 510 (VSVCLYGTATVAKIILIHTLA) form a helical membrane-spanning segment. Topologically, residues 511–519 (KRFYYMNAS) are cytoplasmic. The helical transmembrane segment at 520-540 (AQYLGEVFFDISLFVHCCFLV) threads the bilayer. Residue T541 is a topological domain, lumenal. A helical transmembrane segment spans residues 542–562 (LTYQGLCSAFISAVWVAFPLL). Over 563–579 (TKLCVHKDFKQHGAQGK) the chain is Cytoplasmic. Residues 580 to 600 (FIAFYLLGMFIPYLYALYLIW) traverse the membrane as a helical segment. The Lumenal portion of the chain corresponds to 601–621 (AVFEMFTPILGRSGSEIPPDV). The helical transmembrane segment at 622 to 642 (VLASILAGCTMILSSYFINFI) threads the bilayer. Over 643–651 (YLAKSTKKT) the chain is Cytoplasmic. Residues 652 to 672 (MLTLTLVCAITFLLVCSGTFF) form a helical membrane-spanning segment. Residues 673-904 (PYSSNPANPK…WVCTYDLFVF (232 aa)) are Lumenal-facing. An N-linked (GlcNAc...) asparagine glycan is attached at N730.

This sequence belongs to the peptidase M28 family. The cofactor is Zn(2+).

Its subcellular location is the endoplasmic reticulum membrane. In terms of biological role, within the ovary, required for the organization of somatic cells and oocytes into discrete follicular structures. The chain is Endoplasmic reticulum metallopeptidase 1 from Homo sapiens (Human).